Consider the following 387-residue polypeptide: Deoxyhypusine synthase (387 aa).

Residues 108 to 112, 134 to 136, Glu-140, and Asp-257 each bind NAD(+); these read SNLIS and SAG. 139-140 serves as a coordination point for spermidine; that stretch reads EE. Asp-262 contributes to the spermidine binding site. Gly-304 lines the NAD(+) pocket. His-309 provides a ligand contact to spermidine. 329–330 provides a ligand contact to NAD(+); sequence TG. Spermidine is bound by residues 335–337 and 344–350; these read GSD and EAVSWGK. Lys-350 acts as the Nucleophile in catalysis. NAD(+) is bound at residue 363–364; that stretch reads DV.

This sequence belongs to the deoxyhypusine synthase family. In terms of assembly, homotetramer. NAD(+) is required as a cofactor.

The catalysed reaction is [eIF5A protein]-L-lysine + spermidine = [eIF5A protein]-deoxyhypusine + propane-1,3-diamine. It participates in protein modification; eIF5A hypusination. Catalyzes the NAD-dependent oxidative cleavage of spermidine and the subsequent transfer of the butylamine moiety of spermidine to the epsilon-amino group of a specific lysine residue of the eIF-5A precursor protein to form the intermediate deoxyhypusine residue. This is Deoxyhypusine synthase from Saccharomyces cerevisiae (strain ATCC 204508 / S288c) (Baker's yeast).